The chain runs to 755 residues: Photosystem I P700 chlorophyll a apoprotein A1 (755 aa).

A run of 8 helical transmembrane segments spans residues 72 to 95 (IFSA…FHGA), 158 to 181 (LYCT…FHYH), 197 to 221 (LNHH…HVSL), 297 to 315 (TAHH…GHMY), 352 to 375 (WHAQ…QHMY), 391 to 417 (LSLF…IFMV), 439 to 461 (AIIS…LYVH), and 536 to 554 (FMVH…LILL). Positions 578 and 587 each coordinate [4Fe-4S] cluster. A run of 2 helical transmembrane segments spans residues 594 to 615 (HVFL…HFSW) and 669 to 691 (LSAY…MFLF). Residue histidine 680 coordinates chlorophyll a'. The chlorophyll a site is built by methionine 688 and tyrosine 696. Residue tryptophan 697 coordinates phylloquinone. A helical transmembrane segment spans residues 729 to 749 (AVGVAHYLLGGIATTWAFFLA).

The protein belongs to the PsaA/PsaB family. In terms of assembly, the PsaA/B heterodimer binds the P700 chlorophyll special pair and subsequent electron acceptors. PSI consists of a core antenna complex that captures photons, and an electron transfer chain that converts photonic excitation into a charge separation. The cyanobacterial PSI reaction center is composed of one copy each of PsaA,B,C,D,E,F,I,J,K,L,M and X, and forms trimeric complexes. It depends on PSI electron transfer chain: 5 chlorophyll a, 1 chlorophyll a', 2 phylloquinones and 3 4Fe-4S clusters. PSI core antenna: 90 chlorophyll a, 22 carotenoids, 3 phospholipids and 1 galactolipid. P700 is a chlorophyll a/chlorophyll a' dimer, A0 is one or more chlorophyll a, A1 is one or both phylloquinones and FX is a shared 4Fe-4S iron-sulfur center. as a cofactor.

It localises to the cellular thylakoid membrane. It catalyses the reaction reduced [plastocyanin] + hnu + oxidized [2Fe-2S]-[ferredoxin] = oxidized [plastocyanin] + reduced [2Fe-2S]-[ferredoxin]. Its function is as follows. PsaA and PsaB bind P700, the primary electron donor of photosystem I (PSI), as well as the electron acceptors A0, A1 and FX. PSI is a plastocyanin/cytochrome c6-ferredoxin oxidoreductase, converting photonic excitation into a charge separation, which transfers an electron from the donor P700 chlorophyll pair to the spectroscopically characterized acceptors A0, A1, FX, FA and FB in turn. Oxidized P700 is reduced on the lumenal side of the thylakoid membrane by plastocyanin or cytochrome c6. The polypeptide is Photosystem I P700 chlorophyll a apoprotein A1 (Thermostichus vulcanus (Synechococcus vulcanus)).